The following is a 252-amino-acid chain: SPbeta prophage-derived uncharacterized protein YomH (252 aa).

This chain is SPbeta prophage-derived uncharacterized protein YomH (yomH), found in Bacillus subtilis (strain 168).